The primary structure comprises 73 residues: Large ribosomal subunit protein uL24 (73 aa).

Over residues 51 to 65 the composition is skewed to basic and acidic residues; it reads DDNPKGGFIHKEKPM. The interval 51-73 is disordered; it reads DDNPKGGFIHKEKPMHISNVKKA.

Belongs to the universal ribosomal protein uL24 family. In terms of assembly, part of the 50S ribosomal subunit.

In terms of biological role, one of two assembly initiator proteins, it binds directly to the 5'-end of the 23S rRNA, where it nucleates assembly of the 50S subunit. Its function is as follows. One of the proteins that surrounds the polypeptide exit tunnel on the outside of the subunit. The polypeptide is Large ribosomal subunit protein uL24 (Helicobacter pylori (strain Shi470)).